Consider the following 273-residue polypeptide: GTP cyclohydrolase MptA (273 aa).

This sequence belongs to the GTP cyclohydrolase IV family. As to quaternary structure, homodimer. Fe(2+) is required as a cofactor.

It catalyses the reaction GTP + H2O = 7,8-dihydroneopterin 2',3'-cyclic phosphate + formate + diphosphate + H(+). It participates in cofactor biosynthesis; 5,6,7,8-tetrahydromethanopterin biosynthesis. Functionally, converts GTP to 7,8-dihydro-D-neopterin 2',3'-cyclic phosphate, the first intermediate in the biosynthesis of coenzyme methanopterin. The polypeptide is GTP cyclohydrolase MptA (Picrophilus torridus (strain ATCC 700027 / DSM 9790 / JCM 10055 / NBRC 100828 / KAW 2/3)).